The primary structure comprises 34 residues: Sarcoplasmic/endoplasmic reticulum calcium ATPase regulator DWORF (34 aa).

A helical transmembrane segment spans residues 12–32 (IVPILLLVGWIVGCIIVIYIV).

As to quaternary structure, homooligomer. Can also form heterooligomers with other sarcoplasmic/endoplasmic reticulum calcium ATPase (SERCA) regulators ARLN, ERLN, PLN and SLN. Monomer. Interacts with ATP2A1/SERCA1; the interaction results in activation of ATP2A1. Interacts as a monomer with ATP2A2/SERCA2; the interaction results in activation of ATP2A2. Highly expressed in heart (at protein level). Detected in heart and soleus, a postural muscle group of the hindlimb containing the highest enrichment of slow-twitch muscle fibers. Also expressed in diaphragm, which contains some slow-twitch fibers. Not detected in the quadriceps, a fast-twitch muscle group, or in cardiac atrial muscle. Not expressed in the prenatal heart but gradually increases in abundance postnatally.

The protein localises to the sarcoplasmic reticulum membrane. In terms of biological role, enhances the activity of ATP2A1/SERCA1 ATPase in sarcoplasmic reticulum by displacing ATP2A1/SERCA1 inhibitors, thereby acting as a key regulator of skeletal muscle activity. Also enhances the activity of the ATP2A2/SERCA2 ATPase. Does not directly stimulate SERCA pump activity. Binds preferentially to the phosphorylated E1 and E2 conformational forms of ATP2A2 which predominate at high Ca(2+) concentrations during the systolic phase of the cardiac cycle. Competes with ATP2A2 inhibitor phospholamban (PLN) for binding to ATP2A2 and displaces PLN. Can activate ATP2A2 directly in the absence of PLN. Also enhances sarcoplasmic reticulum Ca(2+) uptake and myocyte contractility by displacing the SERCA inhibitory peptides sarcolipin (SLN) and myoregulin (MRLN). This is Sarcoplasmic/endoplasmic reticulum calcium ATPase regulator DWORF from Mus musculus (Mouse).